The sequence spans 556 residues: Probable zinc metalloprotease EGY2, chloroplastic (556 aa).

The transit peptide at 1-64 (MNLAVASFRG…VFRKRETLVR (64 aa)) directs the protein to the chloroplast. A disordered region spans residues 63-133 (VRVTETQTEP…DGDKLEVSSG (71 aa)). Helical transmembrane passes span 267-287 (AVPEWFAAGSFGLVALFTLFL), 311-331 (LPGALVTALVLGVHELGHILV), 336-356 (GIKLGVPFFVPSWQIGSFGAI), 374-394 (AAGPLAGFSLGLILFLIGLFV), 437-457 (PLVIWAWAGLLINGINSIPAG), 484-504 (LLGLSALFSDVAFYWVVLIFF), and 527-547 (LGILVLFLSLLVCLPYPFAFT).

The protein belongs to the peptidase M50B family.

The protein resides in the plastid. Its subcellular location is the chloroplast membrane. Functionally, probable membrane-associated metalloprotease that may be involved in chloroplast development. The sequence is that of Probable zinc metalloprotease EGY2, chloroplastic (EGY2) from Arabidopsis thaliana (Mouse-ear cress).